Consider the following 210-residue polypeptide: Cytochrome c biogenesis ATP-binding export protein CcmA (210 aa).

Residues 3–209 form the ABC transporter domain; sequence LTVTNLACAR…PADDPFAGVT (207 aa). 35-42 contributes to the ATP binding site; sequence GPNGIGKT.

It belongs to the ABC transporter superfamily. CcmA exporter (TC 3.A.1.107) family. The complex is composed of two ATP-binding proteins (CcmA) and two transmembrane proteins (CcmB).

It is found in the cell inner membrane. It carries out the reaction heme b(in) + ATP + H2O = heme b(out) + ADP + phosphate + H(+). Its function is as follows. Part of the ABC transporter complex CcmAB involved in the biogenesis of c-type cytochromes; once thought to export heme, this seems not to be the case, but its exact role is uncertain. Responsible for energy coupling to the transport system. This is Cytochrome c biogenesis ATP-binding export protein CcmA from Cereibacter sphaeroides (strain ATCC 17023 / DSM 158 / JCM 6121 / CCUG 31486 / LMG 2827 / NBRC 12203 / NCIMB 8253 / ATH 2.4.1.) (Rhodobacter sphaeroides).